Consider the following 110-residue polypeptide: Large ribosomal subunit protein uL24 (110 aa).

The protein belongs to the universal ribosomal protein uL24 family. In terms of assembly, part of the 50S ribosomal subunit.

One of two assembly initiator proteins, it binds directly to the 5'-end of the 23S rRNA, where it nucleates assembly of the 50S subunit. Functionally, one of the proteins that surrounds the polypeptide exit tunnel on the outside of the subunit. The polypeptide is Large ribosomal subunit protein uL24 (Desulfovibrio desulfuricans (strain ATCC 27774 / DSM 6949 / MB)).